The primary structure comprises 468 residues: ATP synthase subunit beta (468 aa).

148 to 155 (GGAGVGKT) provides a ligand contact to ATP.

It belongs to the ATPase alpha/beta chains family. In terms of assembly, F-type ATPases have 2 components, CF(1) - the catalytic core - and CF(0) - the membrane proton channel. CF(1) has five subunits: alpha(3), beta(3), gamma(1), delta(1), epsilon(1). CF(0) has three main subunits: a(1), b(2) and c(9-12). The alpha and beta chains form an alternating ring which encloses part of the gamma chain. CF(1) is attached to CF(0) by a central stalk formed by the gamma and epsilon chains, while a peripheral stalk is formed by the delta and b chains.

Its subcellular location is the cell inner membrane. It carries out the reaction ATP + H2O + 4 H(+)(in) = ADP + phosphate + 5 H(+)(out). Produces ATP from ADP in the presence of a proton gradient across the membrane. The catalytic sites are hosted primarily by the beta subunits. The protein is ATP synthase subunit beta of Xanthomonas euvesicatoria pv. vesicatoria (strain 85-10) (Xanthomonas campestris pv. vesicatoria).